Consider the following 545-residue polypeptide: MSRFIFVTGGVVSSLGKGITSASLATLLEARGLNVTLIKMDPYINVDPGTMSPYQHGEVFVTEDGAETDLDLGHYERFIRTRLNRRNSFTTGRVYQHVLDKERRGEYLGATVQVIPHITDEIKLKIREGAGDADVAIVEIGGTAGDIESLPFLEAARQMRVELGSSQSLLVHLTLVPYIATAGEIKTKPTQHSVKELRSIGLQPDILVCRADDPIPQSAREKIALFTNVEARAVISSPDCKTIYQVPRGMHEQGLDAIVVEKFGLDLPEPDLGEWDRVVEAQLNPEHEVTVGMVGKYIELVDAYKSLNEALIHAGISNRAKVNILYLDAEDIERDGTGVLESLDAILVPGGFGDRGTEGKIAAIRYARENKVPYLGICLGMQLAVIEYARHVAGIEKAHSSELNPNTPDPVVGLITEWITEDGQKELRSADSDLGGTMRLGGQECVLEADSRAAECYGSTHIVERHRHRYEVNNNYLPQLEAAGLKIVGRSADGELVEVIEVGDHPWFVACQFHPEFTSTPRDGHGLFKGYVAAALAEQKAHKET.

An amidoligase domain region spans residues 1-265 (MSRFIFVTGG…DAIVVEKFGL (265 aa)). S13 contacts CTP. UTP is bound at residue S13. 14 to 19 (SLGKGI) is an ATP binding site. Y54 contacts L-glutamine. D71 provides a ligand contact to ATP. Mg(2+) is bound by residues D71 and E139. Residues 146–148 (DIE), 186–191 (KTKPTQ), and K222 contribute to the CTP site. UTP-binding positions include 186-191 (KTKPTQ) and K222. Residues 290–541 (TVGMVGKYIE…VAAALAEQKA (252 aa)) enclose the Glutamine amidotransferase type-1 domain. L-glutamine is bound at residue G351. The active-site Nucleophile; for glutamine hydrolysis is C378. L-glutamine-binding positions include 379–382 (LGMQ), E402, and R469. Residues H514 and E516 contribute to the active site.

This sequence belongs to the CTP synthase family. In terms of assembly, homotetramer.

It carries out the reaction UTP + L-glutamine + ATP + H2O = CTP + L-glutamate + ADP + phosphate + 2 H(+). The enzyme catalyses L-glutamine + H2O = L-glutamate + NH4(+). The catalysed reaction is UTP + NH4(+) + ATP = CTP + ADP + phosphate + 2 H(+). It functions in the pathway pyrimidine metabolism; CTP biosynthesis via de novo pathway; CTP from UDP: step 2/2. Allosterically activated by GTP, when glutamine is the substrate; GTP has no effect on the reaction when ammonia is the substrate. The allosteric effector GTP functions by stabilizing the protein conformation that binds the tetrahedral intermediate(s) formed during glutamine hydrolysis. Inhibited by the product CTP, via allosteric rather than competitive inhibition. Functionally, catalyzes the ATP-dependent amination of UTP to CTP with either L-glutamine or ammonia as the source of nitrogen. Regulates intracellular CTP levels through interactions with the four ribonucleotide triphosphates. The protein is CTP synthase of Alcanivorax borkumensis (strain ATCC 700651 / DSM 11573 / NCIMB 13689 / SK2).